The primary structure comprises 126 residues: Fluoride-specific ion channel FluC (126 aa).

4 consecutive transmembrane segments (helical) span residues 6–26, 36–56, 69–89, and 99–119; these read FVAV…FAVL, YGTL…VGFF, LAIT…SEVV, and WAGL…AFGL. The Na(+) site is built by G76 and T79.

It belongs to the fluoride channel Fluc/FEX (TC 1.A.43) family.

The protein localises to the cell inner membrane. The enzyme catalyses fluoride(in) = fluoride(out). With respect to regulation, na(+) is not transported, but it plays an essential structural role and its presence is essential for fluoride channel function. Functionally, fluoride-specific ion channel. Important for reducing fluoride concentration in the cell, thus reducing its toxicity. The polypeptide is Fluoride-specific ion channel FluC (Cupriavidus necator (strain ATCC 17699 / DSM 428 / KCTC 22496 / NCIMB 10442 / H16 / Stanier 337) (Ralstonia eutropha)).